The sequence spans 107 residues: Putative regulatory protein BCG9842_A0044 (107 aa).

The protein belongs to the RemA family.

This Bacillus cereus (strain G9842) protein is Putative regulatory protein BCG9842_A0044.